The primary structure comprises 365 residues: Peptide chain release factor 2 (365 aa).

Glutamine 252 bears the N5-methylglutamine mark.

It belongs to the prokaryotic/mitochondrial release factor family. In terms of processing, methylated by PrmC. Methylation increases the termination efficiency of RF2.

Its subcellular location is the cytoplasm. Functionally, peptide chain release factor 2 directs the termination of translation in response to the peptide chain termination codons UGA and UAA. The sequence is that of Peptide chain release factor 2 from Proteus mirabilis (strain HI4320).